Consider the following 504-residue polypeptide: Probable periplasmic serine endoprotease DegP-like (504 aa).

The first 26 residues, 1–26, serve as a signal peptide directing secretion; sequence MLKTTTVAGLAAVLLTTGLPAEVAQS. Residues 102–118 are compositionally biased toward basic and acidic residues; that stretch reads RADRWRDRRGPRGEGRL. Residues 102–122 form a disordered region; that stretch reads RADRWRDRRGPRGEGRLRPRA. Residues 113–286 are serine protease; the sequence is RGEGRLRPRA…PASVAKDVVD (174 aa). Active-site charge relay system residues include His140, Asp170, and Ser244. Residues 242 to 244 and 299 to 303 each bind substrate; these read GNS and LGVQI. PDZ domains follow at residues 287–378 and 401–491; these read SLIK…LWRS and ATGE…IEAQ. Disordered regions lie at residues 389 to 411 and 428 to 447; these read GTLP…DEGQ and EDGK…AGDR.

The protein belongs to the peptidase S1C family.

The protein resides in the periplasm. The enzyme catalyses Acts on substrates that are at least partially unfolded. The cleavage site P1 residue is normally between a pair of hydrophobic residues, such as Val-|-Val.. Its function is as follows. Might be efficient in the degradation of transiently denatured and unfolded proteins which accumulate in the periplasm following stress conditions. This is Probable periplasmic serine endoprotease DegP-like (degP1) from Rhizobium meliloti (strain 1021) (Ensifer meliloti).